A 199-amino-acid polypeptide reads, in one-letter code: Recombination protein RecR (199 aa).

The C4-type zinc finger occupies C57–C72. Residues S80–P174 form the Toprim domain.

It belongs to the RecR family.

Its function is as follows. May play a role in DNA repair. It seems to be involved in an RecBC-independent recombinational process of DNA repair. It may act with RecF and RecO. The protein is Recombination protein RecR of Stutzerimonas stutzeri (strain A1501) (Pseudomonas stutzeri).